Here is a 200-residue protein sequence, read N- to C-terminus: Small ribosomal subunit protein uS4 (200 aa).

Positions 22 to 42 are disordered; sequence TGKELEKRPYAPGPHGPNQRK. Residues 92 to 152 enclose the S4 RNA-binding domain; that stretch reads ARLDNLVYRM…EKSNNLVVVK (61 aa).

It belongs to the universal ribosomal protein uS4 family. In terms of assembly, part of the 30S ribosomal subunit. Contacts protein S5. The interaction surface between S4 and S5 is involved in control of translational fidelity.

In terms of biological role, one of the primary rRNA binding proteins, it binds directly to 16S rRNA where it nucleates assembly of the body of the 30S subunit. Functionally, with S5 and S12 plays an important role in translational accuracy. The polypeptide is Small ribosomal subunit protein uS4 (Bacillus thuringiensis subsp. konkukian (strain 97-27)).